Here is a 526-residue protein sequence, read N- to C-terminus: Cytochrome P450 monooxygenase 226 (526 aa).

A helical membrane pass occupies residues 15–35 (FATSYAALTVAAVTLLAALLV). 3 N-linked (GlcNAc...) asparagine glycosylation sites follow: asparagine 219, asparagine 277, and asparagine 320. Cysteine 452 is a binding site for heme.

It belongs to the cytochrome P450 family. Heme serves as cofactor.

The protein localises to the membrane. The protein operates within secondary metabolite biosynthesis. Its function is as follows. Cytochrome P450 monooxygenase that is able to use anthracene, carbazole and phenanthrene as substrates for oxidation. These multifunctional properties against a series of polycyclic aromatic hydrocarbons (PAHs) suggest that CYP226 would play important roles, at least in part, in fungal metabolic systems involved in xenobiotic detoxification. This is Cytochrome P450 monooxygenase 226 from Postia placenta (strain ATCC 44394 / Madison 698-R) (Brown rot fungus).